The primary structure comprises 86 residues: MKVSVVLAITVLALLSVAYASEFEEKELVKEVVRTIFLGKEDAALREETDRECKWYLGDCKAHEDCCEHLRCHSRWDWCIWDGTFG.

The N-terminal stretch at 1-20 (MKVSVVLAITVLALLSVAYA) is a signal peptide. The propeptide occupies 21–51 (SEFEEKELVKEVVRTIFLGKEDAALREETDR). Cystine bridges form between Cys-53–Cys-67, Cys-60–Cys-72, and Cys-66–Cys-79. Residue Phe-85 is modified to Phenylalanine amide.

It belongs to the neurotoxin 10 (Hwtx-1) family. 42 (Jztx-44) subfamily. Expressed by the venom gland.

It localises to the secreted. Functionally, probable ion channel inhibitor. In Chilobrachys guangxiensis (Chinese earth tiger tarantula), this protein is U22-theraphotoxin-Cg1a.